Consider the following 194-residue polypeptide: Potassium-transporting ATPase KdpC subunit (194 aa).

A helical transmembrane segment spans residues L12 to F34.

This sequence belongs to the KdpC family. As to quaternary structure, the system is composed of three essential subunits: KdpA, KdpB and KdpC.

It is found in the cell inner membrane. Functionally, part of the high-affinity ATP-driven potassium transport (or Kdp) system, which catalyzes the hydrolysis of ATP coupled with the electrogenic transport of potassium into the cytoplasm. This subunit acts as a catalytic chaperone that increases the ATP-binding affinity of the ATP-hydrolyzing subunit KdpB by the formation of a transient KdpB/KdpC/ATP ternary complex. The protein is Potassium-transporting ATPase KdpC subunit of Salmonella heidelberg (strain SL476).